The primary structure comprises 431 residues: 5-methylthioadenosine/S-adenosylhomocysteine deaminase (431 aa).

His-64 and His-66 together coordinate Zn(2+). Substrate-binding residues include Glu-93, Arg-145, and His-183. His-210 is a binding site for Zn(2+). Residues Glu-213 and Asp-299 each contribute to the substrate site. Asp-299 contacts Zn(2+).

It belongs to the metallo-dependent hydrolases superfamily. MTA/SAH deaminase family. Requires Zn(2+) as cofactor.

It catalyses the reaction S-adenosyl-L-homocysteine + H2O + H(+) = S-inosyl-L-homocysteine + NH4(+). It carries out the reaction S-methyl-5'-thioadenosine + H2O + H(+) = S-methyl-5'-thioinosine + NH4(+). Functionally, catalyzes the deamination of 5-methylthioadenosine and S-adenosyl-L-homocysteine into 5-methylthioinosine and S-inosyl-L-homocysteine, respectively. Is also able to deaminate adenosine. This chain is 5-methylthioadenosine/S-adenosylhomocysteine deaminase, found in Syntrophomonas wolfei subsp. wolfei (strain DSM 2245B / Goettingen).